The following is a 163-amino-acid chain: Phosphopantetheine adenylyltransferase (163 aa).

Serine 11 provides a ligand contact to substrate. Residues 11–12 (SF) and histidine 19 contribute to the ATP site. The substrate site is built by lysine 43, leucine 75, and arginine 89. Residues 90–92 (GLR), glutamate 100, and 125–131 (YSFLSSS) each bind ATP.

Belongs to the bacterial CoaD family. In terms of assembly, homohexamer. Mg(2+) serves as cofactor.

It is found in the cytoplasm. It catalyses the reaction (R)-4'-phosphopantetheine + ATP + H(+) = 3'-dephospho-CoA + diphosphate. It functions in the pathway cofactor biosynthesis; coenzyme A biosynthesis; CoA from (R)-pantothenate: step 4/5. Functionally, reversibly transfers an adenylyl group from ATP to 4'-phosphopantetheine, yielding dephospho-CoA (dPCoA) and pyrophosphate. The polypeptide is Phosphopantetheine adenylyltransferase (Lysinibacillus sphaericus (strain C3-41)).